Consider the following 446-residue polypeptide: Nitrate/nitrite binding protein NrtA (446 aa).

Positions 1 to 28 (MSNFSRSTRRKFMFTAGAAAIGGVVLHG) are cleaved as a signal peptide. Residue cysteine 29 is the site of N-palmitoyl cysteine attachment. Cysteine 29 carries the S-diacylglycerol cysteine lipid modification. Positions 102, 155, 196, 240, and 269 each coordinate nitrate.

This sequence belongs to the CmpA/NrtA family. As to quaternary structure, the complex is composed of two ATP-binding proteins (NrtC and NrtD), two transmembrane proteins (NrtB) and a solute-binding protein (NrtA).

The protein localises to the cell inner membrane. Functionally, part of the ABC transporter complex NrtABCD involved in nitrate uptake. The complex is probably also involved in nitrite transport. NrtA is the substrate-binding protein. Binds nitrate. In Synechocystis sp. (strain ATCC 27184 / PCC 6803 / Kazusa), this protein is Nitrate/nitrite binding protein NrtA.